The sequence spans 259 residues: Acyl-[acyl-carrier-protein]--UDP-N-acetylglucosamine O-acyltransferase (259 aa).

It belongs to the transferase hexapeptide repeat family. LpxA subfamily. Homotrimer.

The protein localises to the cytoplasm. The enzyme catalyses a (3R)-hydroxyacyl-[ACP] + UDP-N-acetyl-alpha-D-glucosamine = a UDP-3-O-[(3R)-3-hydroxyacyl]-N-acetyl-alpha-D-glucosamine + holo-[ACP]. Its pathway is glycolipid biosynthesis; lipid IV(A) biosynthesis; lipid IV(A) from (3R)-3-hydroxytetradecanoyl-[acyl-carrier-protein] and UDP-N-acetyl-alpha-D-glucosamine: step 1/6. In terms of biological role, involved in the biosynthesis of lipid A, a phosphorylated glycolipid that anchors the lipopolysaccharide to the outer membrane of the cell. In Akkermansia muciniphila (strain ATCC BAA-835 / DSM 22959 / JCM 33894 / BCRC 81048 / CCUG 64013 / CIP 107961 / Muc), this protein is Acyl-[acyl-carrier-protein]--UDP-N-acetylglucosamine O-acyltransferase.